We begin with the raw amino-acid sequence, 198 residues long: Eukaryotic translation initiation factor isoform 4E (198 aa).

The segment at 1-25 (MATDDVNEPLPAAAELPATEAEKQP) is disordered. Alanine 2 carries the N-acetylalanine modification. The segment covering 8-19 (EPLPAAAELPAT) has biased composition (low complexity). Residues 46-47 (WG) and 92-93 (WE) contribute to the mRNA site. A disulfide bond links cysteine 97 and cysteine 138. Residue 145–152 (RPQSKQDK) coordinates mRNA.

This sequence belongs to the eukaryotic initiation factor 4E family. EIF4F is a multi-subunit complex, the composition of which varies with external and internal environmental conditions. It is composed of at least EIF4A, EIF4E and EIF4G. EIF4E is also known to interact with other partners. In higher plants two isoforms of EIF4F have been identified, named isoform EIF4F and isoform EIF(iso)4F. Isoform EIF4F has subunits p220 and p26, whereas isoform EIF(iso)4F has subunits p82 and p28. This isoform interacts with the viral protein genome linked (VPg)-proteinase of turnip mosaic potyvirus. Interacts directly with LOX2. Interacts with BTF3. In terms of processing, according to the redox status, the Cys-97-Cys-138 disulfide bridge may have a role in regulating protein function by affecting its ability to bind capped mRNA. Abundant in floral organs and in young developing tissues.

Recognizes and binds the 7-methylguanosine-containing mRNA cap during an early step in the initiation of protein synthesis and facilitates ribosome binding by inducing the unwinding of the mRNAs secondary structures. Mediates susceptibility to Turnipmosaic potyvirus (TuMV) and Tobacco etch potyvirus (TEV). The protein is Eukaryotic translation initiation factor isoform 4E (EIF(ISO)4E) of Arabidopsis thaliana (Mouse-ear cress).